Consider the following 347-residue polypeptide: MDENKRKALGAALSQIEKQFGKGSVMRMGDVAAVRDIDVIPTGSLALDIALGCGGLPRGRIVEIYGPESSGKTTLTLEVIAQAQKTGGVAAFVDAEHALDPVYAEKIGVNLDDLLVSQPDTGEQALEIADVLVRSGGVDVVVIDSVAALTPKAELEGEMGDSHMGLQARLMSQALRKLTANIKRSNTLVIFINQIRMKIGVMFGNPETTTGGNALKFYASVRLDIRRSGAIKNGDEVIGNETRVKVVKNKVAPPFRTADFEILYGEGISREGELIDLGVNHDIVQKSGSWYSYGGDRIGQGKDNVRIYLKEHPEVAAAIEAAVREKALAGFQHAPSAERAALEESGF.

ATP is bound at residue Gly-66–Thr-73.

Belongs to the RecA family.

The protein localises to the cytoplasm. Its function is as follows. Can catalyze the hydrolysis of ATP in the presence of single-stranded DNA, the ATP-dependent uptake of single-stranded DNA by duplex DNA, and the ATP-dependent hybridization of homologous single-stranded DNAs. It interacts with LexA causing its activation and leading to its autocatalytic cleavage. The polypeptide is Protein RecA (Methylococcus capsulatus (strain ATCC 33009 / NCIMB 11132 / Bath)).